Reading from the N-terminus, the 422-residue chain is MVTIVLGAQFGDEGKGKITDLLSQSATLCCRAAGGHNAGHTIVHDNITYDFHILPSGLIAPDCVNLIGTGTVVHLPSFFKELDALKAKGLKDAHERIFISDRAQVCFDLHSVVDGLEEASLAGKKVGTTGKGIGPCYSDKAARRGVRIGEVLEEGVVEDNLRKLEAGYRARFGELNYDLEEEIGRFNEYRTKLQPYVVDQMTFLAKYRSSPSILVEGANALMLDIDHGTYPYVTSSCTGVGGAIQGLTLNPTSIRSIIGVVKAYSTRVGSGPFPTEQNNAIGEKMQTIGREFGVTTGRRRRCGWLDMVMCRYSNSINHYTSINLTKLDILDDFDEIKVAVAYKLDGKRLESFPALPGVLDKVEAEYVTFPGWKSTTMGITRWEDLPANAQRYIQFIEREMGGVPIKWIGTGPARTHMIEREV.

GTP contacts are provided by residues 11–17 and 39–41; these read GDEGKGK and GHT. Catalysis depends on Asp-12, which acts as the Proton acceptor. Residues Asp-12 and Gly-39 each coordinate Mg(2+). IMP contacts are provided by residues 12–15, 37–40, Thr-129, Arg-143, Asn-219, Thr-234, and Arg-298; these read DEGK and NAGH. Catalysis depends on His-40, which acts as the Proton donor. A substrate-binding site is contributed by 294-300; sequence VTTGRRR. GTP contacts are provided by residues Arg-300, 326–328, and 409–411; these read KLD and GTG.

This sequence belongs to the adenylosuccinate synthetase family. In terms of assembly, homodimer. Mg(2+) serves as cofactor.

Its subcellular location is the cytoplasm. The catalysed reaction is IMP + L-aspartate + GTP = N(6)-(1,2-dicarboxyethyl)-AMP + GDP + phosphate + 2 H(+). It functions in the pathway purine metabolism; AMP biosynthesis via de novo pathway; AMP from IMP: step 1/2. Functionally, plays an important role in the de novo pathway and in the salvage pathway of purine nucleotide biosynthesis. Catalyzes the first committed step in the biosynthesis of AMP from IMP. The chain is Adenylosuccinate synthetase from Ajellomyces capsulatus (strain H143) (Darling's disease fungus).